Here is a 33-residue protein sequence, read N- to C-terminus: Pardaxin P-3 (33 aa).

Belongs to the pardaxin family. In terms of assembly, in aqueous solution exists as a tetramer.

It is found in the secreted. The protein resides in the target cell membrane. Functionally, exhibits unusual shark repellent and surfactant properties. Forms voltage-dependent, ion-permeable channels in membranes. At high concentration causes cell membrane lysis. This Pardachirus pavoninus (Peacock sole) protein is Pardaxin P-3.